Consider the following 396-residue polypeptide: Tryptophan synthase beta chain (396 aa).

Lysine 86 is modified (N6-(pyridoxal phosphate)lysine).

The protein belongs to the TrpB family. In terms of assembly, tetramer of two alpha and two beta chains. Pyridoxal 5'-phosphate serves as cofactor.

It catalyses the reaction (1S,2R)-1-C-(indol-3-yl)glycerol 3-phosphate + L-serine = D-glyceraldehyde 3-phosphate + L-tryptophan + H2O. It participates in amino-acid biosynthesis; L-tryptophan biosynthesis; L-tryptophan from chorismate: step 5/5. The beta subunit is responsible for the synthesis of L-tryptophan from indole and L-serine. The protein is Tryptophan synthase beta chain of Vibrio cholerae serotype O1 (strain ATCC 39315 / El Tor Inaba N16961).